The following is a 1342-amino-acid chain: MVYSYTEKKRIRKDFGTRPQVLDIPYLLSIQLDSFDKFIEQDPEGQYGLEAAFRSVFPIQSYNGNSELQYVSYRLGEPVFDVKECQIRGVTYSKPLRVKLRLVIFDKDAPAGTVKDIKEQEVYMGEIPLMTDNGTFVINGTERVIVSQLHRSPGVFFDSDKGKTHSSGKVLYNARVIPYRGSWLDFEFDPKDNLYVRIDRRRKLPASIILRALGKTSEEILDIFFEKVNFEVKDQTLLMELVPDRLRGETASFDIEANGKTYVEQGRRVTARHIRQLEKDGVDHIEVPVEYIVGKVASKDYINEATGEIIVNANQEISLEALANLSQAGHKSLETLFTNDLDHGPFMSETLRIDSTVDRISALVEIYRMMRPGEPPTKEAAEALFESLFFSEERYDLSTVGRMKFNSSIGREDAQEQGTLDELDIVEVMKKLIAIRNGKGEVDDIDHLGNRRIRSVGEMAENQFRVGLVRVERAVKERLSLGDLDAIMPQDLINAKPISAAVKEFFGSSQLSQFMDQNNPLSEVTHKRRISALGPGGLTRERAGFEVRDVHVTHYGRLCPIETPEGPNIGLINSLSAFARCNEYGFLETPYRRVVDGVVTDEVDYLSAIEEGQFVIAQANAALTEEGGFADELITARQKGESGLHPREHAQYMDVATNQVVSIAASLIPFLEHDDANRALMGANMQRQAVPTLKADKPLVGTGIERNVAVDSGVTAVAKRGGVIQSVDASRIVVKVNEEELVPGEAGIDIYNLTKYTRSNQNTCINQRPCVMPGEPVSRGDVLADGPSTDLGELALGQNMRIAFMPWNGYNFEDSILVSERVVQEDRFTTIHIQELTCVARDTKLGSEEITADIPNVGESALSKLDESGIVYIGAEVKGGDILVGKVTPKGETQLTPEEKLLRAIFGEKASDVKDTSLRVPNSVSGTIIDVQVFTRDGVEKDKRALEIEQMQLKEAKKDLTEEFQILEGGLLNRVRAVLIDGGYSEAKLDTTDRKKWLELTLEDDALQTQLEQLAEQWDELKADFDKKFETKRRKITQGDDLAPGVLKIVKVYLAVKRRIQPGDKMAGRHGNKGVISKINPVEDMPYDEKGQPVDIVLNPLGVPSRMNIGQILEVHLGLAAKGIGDKINQMVKEQQELAKFREFLQKVYDLGETRQKVDIASLSDDEVRTLIKNLRGGLPIATPVFDGAPEASIKALLKLADLPESGQLKLFDGRTGDQFERPVTVGYMYMLKLNHLVDDKMHARSTGSYSLVTQQPLGGKAQFGGQRFGEMEVWALEAYGAAYTLQEMLTVKSDDVNGRTKMYKNIVDGNHSMEPGMPESFNVLLKEIRSLGINIELEDEE.

The protein belongs to the RNA polymerase beta chain family. As to quaternary structure, the RNAP catalytic core consists of 2 alpha, 1 beta, 1 beta' and 1 omega subunit. When a sigma factor is associated with the core the holoenzyme is formed, which can initiate transcription.

The catalysed reaction is RNA(n) + a ribonucleoside 5'-triphosphate = RNA(n+1) + diphosphate. DNA-dependent RNA polymerase catalyzes the transcription of DNA into RNA using the four ribonucleoside triphosphates as substrates. The sequence is that of DNA-directed RNA polymerase subunit beta from Vibrio campbellii (strain ATCC BAA-1116).